The following is a 931-amino-acid chain: Netrin receptor UNC5C (931 aa).

The signal sequence occupies residues 1–40; sequence MRKGLRATAARCGLGLGYLLQMLVLPALALLSASGTGSAA. The Extracellular segment spans residues 41-380; the sequence is QDDDFFHELP…APDSDDVALY (340 aa). In terms of domain architecture, Ig-like spans 62–159; sequence PHFLIEPEEA…AGTTKSRKAY (98 aa). Cystine bridges form between Cys-83–Cys-144, Cys-95–Cys-142, Cys-188–Cys-239, Cys-272–Cys-309, Cys-276–Cys-313, Cys-287–Cys-299, Cys-328–Cys-362, Cys-332–Cys-367, and Cys-340–Cys-352. The Ig-like C2-type domain maps to 161 to 256; it reads RIAYLRKTFE…KRKSTTATVI (96 aa). Asn-236 carries an N-linked (GlcNAc...) asparagine glycan. TSP type-1 domains lie at 260-314 and 316-368; these read NGGW…TLCP and DGRW…GLCM. N-linked (GlcNAc...) asparagine glycosylation occurs at Asn-361. A helical transmembrane segment spans residues 381 to 401; the sequence is VGIVIAVIVCLAISVVVALFV. Residues 402–931 are Cytoplasmic-facing; that stretch reads YRKNHRDFES…VVSLAAEGQY (530 aa). The tract at residues 402-931 is required for netrin-mediated axon repulsion of neuronal growth cones; the sequence is YRKNHRDFES…VVSLAAEGQY (530 aa). Ser-502 is modified (phosphoserine). Residues 530–673 form the ZU5 domain; that stretch reads CTAFGSFNSL…LSTYALVGHS (144 aa). Position 568 is a phosphotyrosine (Tyr-568). An interaction with DCC region spans residues 694–712; it reads SLEYSIRVYCLDDTQDALK. The Death domain maps to 850–929; the sequence is QKLCSSLDAP…ETVVSLAAEG (80 aa).

Belongs to the unc-5 family. Interacts with DCC (via cytoplasmic domain). Interacts (tyrosine phosphorylated form) with PTPN11. Interacts (via extracellular domain) with FLRT3 (via extracellular domain). Interacts (via Ig-like C2-type domain) with DSCAM (via extracellular domain). Interacts (via death domain) with DAPK1. Interacts (via cytoplasmic domain) with TUBB3; this interaction is decreased by NTN1/Netrin-1. Post-translationally, proteolytically cleaved by caspases during apoptosis. The cleavage does not take place when the receptor is associated with netrin ligand. Its cleavage by caspases is required to induce apoptosis. In terms of processing, phosphorylated on different cytoplasmic tyrosine residues. Phosphorylation of Tyr-568 leads to an interaction with PTPN11 phosphatase, suggesting that its activity is regulated by phosphorylation/dephosphorylation. Tyrosine phosphorylation is netrin-dependent. As to expression, mainly expressed in brain. Expressed in temporal lobe cortical neurons and in neurons of the hippocampal pyramidal layer. Also expressed in kidney. Not expressed in developing or adult lung.

The protein localises to the cell membrane. It is found in the cell surface. Its subcellular location is the synapse. The protein resides in the synaptosome. It localises to the cell projection. The protein localises to the axon. It is found in the dendrite. Its subcellular location is the growth cone. The protein resides in the lamellipodium. It localises to the filopodium. Its function is as follows. Receptor for netrin required for axon guidance. Mediates axon repulsion of neuronal growth cones in the developing nervous system upon ligand binding. NTN1/Netrin-1 binding might cause dissociation of UNC5C from polymerized TUBB3 in microtubules and thereby lead to increased microtubule dynamics and axon repulsion. Axon repulsion in growth cones may also be caused by its association with DCC that may trigger signaling for repulsion. Might also collaborate with DSCAM in NTN1-mediated axon repulsion independently of DCC. Also involved in corticospinal tract axon guidance independently of DCC. Involved in dorsal root ganglion axon projection towards the spinal cord. It also acts as a dependence receptor required for apoptosis induction when not associated with netrin ligand. The chain is Netrin receptor UNC5C (UNC5C) from Homo sapiens (Human).